The sequence spans 166 residues: 2-amino-4-hydroxy-6-hydroxymethyldihydropteridine pyrophosphokinase (166 aa).

The protein belongs to the HPPK family.

The enzyme catalyses 6-hydroxymethyl-7,8-dihydropterin + ATP = (7,8-dihydropterin-6-yl)methyl diphosphate + AMP + H(+). Its pathway is cofactor biosynthesis; tetrahydrofolate biosynthesis; 2-amino-4-hydroxy-6-hydroxymethyl-7,8-dihydropteridine diphosphate from 7,8-dihydroneopterin triphosphate: step 4/4. Catalyzes the transfer of pyrophosphate from adenosine triphosphate (ATP) to 6-hydroxymethyl-7,8-dihydropterin, an enzymatic step in folate biosynthesis pathway. The protein is 2-amino-4-hydroxy-6-hydroxymethyldihydropteridine pyrophosphokinase (folK) of Streptococcus pyogenes serotype M1.